Reading from the N-terminus, the 508-residue chain is MGLPWYRVHTVVLNDPGRLLSVHIMHTALVAGWAGSMALYELAVFDPSDPVLDPMWRQGMFVIPFMTRLGITNSWGGWSITGGTITNPGIWSYEGVAGAHIVFSGLCFLAAIWHWVYWDLEIFSDERTGKPSLDLPKIFGIHLFLAGVACFGFGAFHVTGLYGPGIWVSDPYGLTGKVQAVNPSWGVEGFDPFVPGGIASHHIAAGTLGILAGLFHLSVRPPQRLYKGLRMGNIETVLSSSIAAVFFAAFVVAGTMWYGSATTPIELFGPTRYQWDQGYFQQEIYRRVSAGLAENQSLSEAWSKIPEKLAFYDYIGNNPAKGGLFRAGSMDNGDGIAVGWLGHPIFRDKEGRELFVRRMPTFFETFPVVLVDGDGIVRADVPFRRAESKYSVEQVGVTVEFYGGELNGVSYSDPVTVKKYARRAQLGEIFELDRATLKSDGVFRSSPRGWFTFGHASFALLFFFGHIWHGARTLFRDVFAGIDPDLDAQVEFGAFQKLGDPTTRRQIG.

Transmembrane regions (helical) follow at residues 21 to 36, 101 to 115, 140 to 156, 203 to 218, 237 to 252, and 457 to 472; these read SVHIMHTALVAGWAGS, IVFSGLCFLAAIWHW, GIHLFLAGVACFGFGAF, IAAGTLGILAGLFHLS, VLSSSIAAVFFAAFVV, and SFALLFFFGHIWHGAR.

Belongs to the PsbB/PsbC family. PsbB subfamily. In terms of assembly, PSII is composed of 1 copy each of membrane proteins PsbA, PsbB, PsbC, PsbD, PsbE, PsbF, PsbH, PsbI, PsbJ, PsbK, PsbL, PsbM, PsbT, PsbX, PsbY, PsbZ, Psb30/Ycf12, at least 3 peripheral proteins of the oxygen-evolving complex and a large number of cofactors. It forms dimeric complexes. Binds multiple chlorophylls. PSII binds additional chlorophylls, carotenoids and specific lipids. serves as cofactor.

Its subcellular location is the plastid. It is found in the chloroplast thylakoid membrane. Functionally, one of the components of the core complex of photosystem II (PSII). It binds chlorophyll and helps catalyze the primary light-induced photochemical processes of PSII. PSII is a light-driven water:plastoquinone oxidoreductase, using light energy to abstract electrons from H(2)O, generating O(2) and a proton gradient subsequently used for ATP formation. This chain is Photosystem II CP47 reaction center protein, found in Lactuca sativa (Garden lettuce).